A 554-amino-acid polypeptide reads, in one-letter code: Carboxypeptidase Y homolog A (554 aa).

A signal peptide spans 1–17; sequence MRISASTVLLGAASAAS. The propeptide occupies 18-137; sequence AASFQNQAQQ…QLDNFNLRVK (120 aa). Disulfide bonds link C191/C431, C325/C339, C349/C372, C356/C365, and C394/C401. N-linked (GlcNAc...) asparagine glycosylation occurs at N222. The active site involves S278. Residue D470 is part of the active site. The N-linked (GlcNAc...) asparagine glycan is linked to N518. H529 is a catalytic residue.

It belongs to the peptidase S10 family.

The protein resides in the vacuole. It carries out the reaction Release of a C-terminal amino acid with broad specificity.. Vacuolar carboxypeptidase involved in degradation of small peptides. Digests preferentially peptides containing an aliphatic or hydrophobic residue in P1' position, as well as methionine, leucine or phenylalanine in P1 position of ester substrate. In Sordaria macrospora (strain ATCC MYA-333 / DSM 997 / K(L3346) / K-hell), this protein is Carboxypeptidase Y homolog A (CPYA).